The following is a 381-amino-acid chain: MAKRDYYEVLGVGKNASDDEIKKAYRKLAMKYHPDRNPEGKDGKIAEEKFKEVKEAYEMLSDPEKKAAYDQYGHAGVDPNMAGGFGGAQGYGGFAEAFGDIFGDIFGQQAGGRRGGGGPQAYRGADLRYSMEISLEQAAHGHEAQIRVPHWDDCDHCHGNGAEPGSSVETCPTCHGAGQVRVSQGFFTMQQTCPKCHGSGKYIPKPCTKCHGQGKLKSQKTLEVKIPAGIDEGMRIRSSGNGEPGINGGPPGDLYVEVHIKAHPMFERDGDDLHCQMPISFATAALGGDLEVPTLSGKATFPVPEATQSGKTFRLRGKGIKGVRSGYPGDLYVHVNVETPVKLTEAQKEMLRQFDRSVHEGGSRHSPQEQSWLDKVKSFFS.

The J domain occupies 5 to 73; that stretch reads DYYEVLGVGK…EKKAAYDQYG (69 aa). Residues 141-219 form a CR-type zinc finger; the sequence is GHEAQIRVPH…CHGQGKLKSQ (79 aa). Zn(2+) contacts are provided by C154, C157, C171, C174, C193, C196, C207, and C210. CXXCXGXG motif repeat units lie at residues 154–161, 171–178, 193–200, and 207–214; these read CDHCHGNG, CPTCHGAG, CPKCHGSG, and CTKCHGQG. A disordered region spans residues 357–381; that stretch reads SVHEGGSRHSPQEQSWLDKVKSFFS.

This sequence belongs to the DnaJ family. As to quaternary structure, homodimer. The cofactor is Zn(2+).

It localises to the cytoplasm. Its function is as follows. Participates actively in the response to hyperosmotic and heat shock by preventing the aggregation of stress-denatured proteins and by disaggregating proteins, also in an autonomous, DnaK-independent fashion. Unfolded proteins bind initially to DnaJ; upon interaction with the DnaJ-bound protein, DnaK hydrolyzes its bound ATP, resulting in the formation of a stable complex. GrpE releases ADP from DnaK; ATP binding to DnaK triggers the release of the substrate protein, thus completing the reaction cycle. Several rounds of ATP-dependent interactions between DnaJ, DnaK and GrpE are required for fully efficient folding. Also involved, together with DnaK and GrpE, in the DNA replication of plasmids through activation of initiation proteins. This is Chaperone protein DnaJ from Cupriavidus necator (strain ATCC 17699 / DSM 428 / KCTC 22496 / NCIMB 10442 / H16 / Stanier 337) (Ralstonia eutropha).